The primary structure comprises 839 residues: Enhancer of polycomb-like protein 1 (839 aa).

4 disordered regions span residues 350–379, 393–415, 608–640, and 679–839; these read QKKR…AGSA, GSGS…PSKI, LADR…ISSD, and QQQQ…KVDA. The span at 608 to 620 shows a compositional bias: basic and acidic residues; sequence LADRQKYDRETEP. Residues 621-640 are compositionally biased toward polar residues; sequence TRQMSSYDKDPSQLNGISSD. The span at 679-690 shows a compositional bias: low complexity; sequence QQQQQQMRNRQQ. Residues 697–713 show a composition bias toward gly residues; it reads PGAGLGGGQGAGGGAGG. The segment covering 714-730 has biased composition (polar residues); the sequence is SRNNSPAPGTNGPQSKM. Over residues 747 to 786 the composition is skewed to low complexity; sequence QHQQYQQMQQQQQQQQQQQQQRKMGVAPMNAASAAAAMAA. Residues 828 to 839 show a composition bias toward basic and acidic residues; the sequence is MKQKSELAKVDA.

The protein belongs to the enhancer of polycomb family. In terms of assembly, component of the NuA4 histone acetyltransferase complex.

Its subcellular location is the nucleus. Its function is as follows. Component of the NuA4 histone acetyltransferase complex which is involved in transcriptional activation of selected genes principally by acetylation of nucleosomal histone H4 and H2A. The NuA4 complex is also involved in DNA repair. Involved in gene silencing by neighboring heterochromatin, blockage of the silencing spreading along the chromosome, and required for cell cycle progression through G2/M. In Yarrowia lipolytica (strain CLIB 122 / E 150) (Yeast), this protein is Enhancer of polycomb-like protein 1 (EPL1).